Consider the following 105-residue polypeptide: Small ribosomal subunit protein eS26 (105 aa).

This sequence belongs to the eukaryotic ribosomal protein eS26 family. As to quaternary structure, component of the small ribosomal subunit.

The protein resides in the cytoplasm. The polypeptide is Small ribosomal subunit protein eS26 (RPS26) (Encephalitozoon cuniculi (strain GB-M1) (Microsporidian parasite)).